The following is a 1356-amino-acid chain: Vascular endothelial growth factor receptor 2 (1356 aa).

Residues 1–19 form the signal peptide; the sequence is MQSKVLLAVALWLCVETRA. Residues 20 to 764 lie on the Extracellular side of the membrane; sequence ASVGLPSVSL…EGAQEKTNLE (745 aa). N-linked (GlcNAc...) asparagine glycans are attached at residues N46, N66, N96, N143, N158, and N245. 7 consecutive Ig-like C2-type domains span residues 46 to 110, 141 to 207, 224 to 320, 328 to 414, 421 to 548, 551 to 660, and 667 to 753; these read NTTL…ETDL, NKNK…INDE, YDVV…KNST, PFVA…HVVS, PQIG…FHVT, PEIT…RQLT, and PTIT…AFFI. C53 and C103 are oxidised to a cystine. A disulfide bridge links C150 with C200. The cysteines at positions 246 and 307 are disulfide-linked. Residues N318, N374, N395, N511, N523, N580, N613, N619, N631, N675, N704, and N721 are each glycosylated (N-linked (GlcNAc...) asparagine). Cystine bridges form between C445–C530 and C571–C642. Residues C688 and C737 are joined by a disulfide bond. Residues 765 to 785 form a helical membrane-spanning segment; it reads IIILVGTAVIAMFFWLLLVII. Topologically, residues 786-1356 are cytoplasmic; it reads LRTVKRANGG…SGTTLSSPPV (571 aa). Y801 carries the post-translational modification Phosphotyrosine. The Protein kinase domain maps to 834–1162; sequence LKLGKPLGRG…FSELVEHLGN (329 aa). ATP-binding positions include 840–848 and K868; that span reads LGRGAFGQV. Position 951 is a phosphotyrosine; by autocatalysis (Y951). S982 and S984 each carry phosphoserine. At Y996 the chain carries Phosphotyrosine; by autocatalysis. C1024 and C1045 are joined by a disulfide. D1028 functions as the Proton acceptor in the catalytic mechanism. Residues Y1054, Y1059, Y1175, and Y1214 each carry the phosphotyrosine; by autocatalysis modification. Residues S1231 and S1235 each carry the phosphoserine modification. The residue at position 1238 (T1238) is a Phosphothreonine. The segment at 1274–1318 is disordered; it reads DRTKLSPSFGGMVPSKSRESVASEGSNQTSGYQSGYHSDDTDTTV. Residues 1296–1309 show a composition bias toward polar residues; sequence SEGSNQTSGYQSGY. Phosphotyrosine; by autocatalysis is present on residues Y1305, Y1309, and Y1319.

This sequence belongs to the protein kinase superfamily. Tyr protein kinase family. CSF-1/PDGF receptor subfamily. As to quaternary structure, homodimer in the presence of bound dimeric VEGFA, VEGFC or VEGFD ligands; monomeric in the absence of bound ligands. Can also form heterodimers with FLT1/VEGFR1 and KDR/VEGFR2. Interacts (tyrosine phosphorylated) with LFYN, NCK1, PLCG1. Interacts (tyrosine-phosphorylated active form preferentially) with DAB2IP (via C2 domain and active form preferentially); the interaction occurs at the late phase of VEGFA response and inhibits KDR/VEGFR2 activity. Interacts with SHBSH2D2A/TSAD, GRB2, MYOF, CBL and PDCD6. Interacts (via C-terminus domain) with ERN1 (via kinase domain); the interaction is facilitated in a XBP1 isoform 1- and vascular endothelial growth factor (VEGF)-dependent manner in endothelial cells. Interacts (via juxtamembrane region) with chaperone PDCL3 (via thioredoxin fold region); the interaction leads to increased KDR/VEGFR2 abundance through inhibition of its ubiquitination and degradation. Interacts (tyrosine phosphorylated) with CCDC88A/GIV (via SH2-like region); binding requires autophosphorylation of the KDR/VEGFR2 C-terminal region. Interacts with isoform 2 of BSG. Interacts with SLC31A1; this interaction is induced upon VEGFA stimulation leading to SLC31A1 and KDR subsequent co-internalization to early endosomes, thereby activating KDR downstream signaling in endothelial cells. In terms of assembly, (Microbial infection) Interacts with HIV-1 Tat. Post-translationally, N-glycosylated. In terms of processing, ubiquitinated. Tyrosine phosphorylation of the receptor promotes its poly-ubiquitination, leading to its degradation via the proteasome or lysosomal proteases. Autophosphorylated on tyrosine residues upon ligand binding. Autophosphorylation occurs in trans, i.e. one subunit of the dimeric receptor phosphorylates tyrosine residues on the other subunit. Phosphorylation at Tyr-951 is important for interaction with SH2D2A/TSAD and VEGFA-mediated reorganization of the actin cytoskeleton. Phosphorylation at Tyr-1175 is important for interaction with PLCG1 and SHB. Phosphorylation at Tyr-1214 is important for interaction with NCK1 and FYN. Dephosphorylated by PTPRB. Dephosphorylated by PTPRJ at Tyr-951, Tyr-996, Tyr-1054, Tyr-1059, Tyr-1175 and Tyr-1214. Post-translationally, the inhibitory disulfide bond between Cys-1024 and Cys-1045 may serve as a specific molecular switch for H(2)S-induced modification that regulates KDR/VEGFR2 function. In terms of tissue distribution, detected in cornea (at protein level). Widely expressed.

It is found in the cell junction. The protein localises to the endoplasmic reticulum. The protein resides in the cell membrane. Its subcellular location is the cytoplasm. It localises to the nucleus. It is found in the cytoplasmic vesicle. The protein localises to the early endosome. The protein resides in the secreted. The enzyme catalyses L-tyrosyl-[protein] + ATP = O-phospho-L-tyrosyl-[protein] + ADP + H(+). Its activity is regulated as follows. Present in an inactive conformation in the absence of bound ligand. Binding of VEGFA, VEGFC or VEGFD leads to dimerization and activation by autophosphorylation on tyrosine residues. Inhibited by the small molecule PTK inhibitor SU5614 ((3Z)-5-Chloro-3-[(3,5-dimethyl-1H-pyrrol-2-yl)methylene]-1,3-dihydro-2H-indol-2-one). May be regulated by hydrogen sulfide (H(2)S) levels via a H(2)S-sensitive intracellular disulfide bond. Functionally, tyrosine-protein kinase that acts as a cell-surface receptor for VEGFA, VEGFC and VEGFD. Plays an essential role in the regulation of angiogenesis, vascular development, vascular permeability, and embryonic hematopoiesis. Promotes proliferation, survival, migration and differentiation of endothelial cells. Promotes reorganization of the actin cytoskeleton. Isoforms lacking a transmembrane domain, such as isoform 2 and isoform 3, may function as decoy receptors for VEGFA, VEGFC and/or VEGFD. Isoform 2 plays an important role as negative regulator of VEGFA- and VEGFC-mediated lymphangiogenesis by limiting the amount of free VEGFA and/or VEGFC and preventing their binding to FLT4. Modulates FLT1 and FLT4 signaling by forming heterodimers. Binding of vascular growth factors to isoform 1 leads to the activation of several signaling cascades. Activation of PLCG1 leads to the production of the cellular signaling molecules diacylglycerol and inositol 1,4,5-trisphosphate and the activation of protein kinase C. Mediates activation of MAPK1/ERK2, MAPK3/ERK1 and the MAP kinase signaling pathway, as well as of the AKT1 signaling pathway. Mediates phosphorylation of PIK3R1, the regulatory subunit of phosphatidylinositol 3-kinase, reorganization of the actin cytoskeleton and activation of PTK2/FAK1. Required for VEGFA-mediated induction of NOS2 and NOS3, leading to the production of the signaling molecule nitric oxide (NO) by endothelial cells. Phosphorylates PLCG1. Promotes phosphorylation of FYN, NCK1, NOS3, PIK3R1, PTK2/FAK1 and SRC. The sequence is that of Vascular endothelial growth factor receptor 2 from Homo sapiens (Human).